Here is a 322-residue protein sequence, read N- to C-terminus: GTP 3',8-cyclase (322 aa).

Residues 4–229 (NFNRNIDYLR…IPVQMKKSGP (226 aa)) enclose the Radical SAM core domain. Arg-13 contributes to the GTP binding site. [4Fe-4S] cluster contacts are provided by Cys-20 and Cys-24. Position 26 (Tyr-26) interacts with S-adenosyl-L-methionine. A [4Fe-4S] cluster-binding site is contributed by Cys-27. Arg-64 is a binding site for GTP. Residue Gly-68 coordinates S-adenosyl-L-methionine. GTP is bound at residue Thr-95. Residue Ser-119 participates in S-adenosyl-L-methionine binding. Lys-156 is a binding site for GTP. Residue Met-190 coordinates S-adenosyl-L-methionine. Positions 253 and 256 each coordinate [4Fe-4S] cluster. 258-260 (RLR) contributes to the GTP binding site. Cys-270 lines the [4Fe-4S] cluster pocket.

This sequence belongs to the radical SAM superfamily. MoaA family. In terms of assembly, monomer and homodimer. The cofactor is [4Fe-4S] cluster.

The enzyme catalyses GTP + AH2 + S-adenosyl-L-methionine = (8S)-3',8-cyclo-7,8-dihydroguanosine 5'-triphosphate + 5'-deoxyadenosine + L-methionine + A + H(+). The protein operates within cofactor biosynthesis; molybdopterin biosynthesis. Its function is as follows. Catalyzes the cyclization of GTP to (8S)-3',8-cyclo-7,8-dihydroguanosine 5'-triphosphate. The sequence is that of GTP 3',8-cyclase from Thermodesulfovibrio yellowstonii (strain ATCC 51303 / DSM 11347 / YP87).